The sequence spans 300 residues: E3 ubiquitin-protein ligase RNF212B (300 aa).

The RING-type zinc-finger motif lies at 6 to 40; it reads CNQCFRKDGAHFFVTSCGHIFCKKCVTLEKCAVCG. A coiled-coil region spans residues 88–124; that stretch reads LIAFYKHRITKLETAMQETQQALVSQDKELSVLRKEN. Disordered stretches follow at residues 141-251 and 280-300; these read YQGS…HTRV and PYQQQRQMGLPSGREAWTTSR. Over residues 155–169 the composition is skewed to polar residues; the sequence is TSPSQSVTPRPSFQH. Low complexity predominate over residues 170-183; sequence SSQVVSRSSSVESV. The span at 191–200 shows a compositional bias: gly residues; that stretch reads GSLGQGGRGL. Residues 211-234 are compositionally biased toward polar residues; that stretch reads NETPSPASTHSLSYRPSSASSGQG.

In terms of assembly, homodimer. In terms of processing, autoubiquitinated.

It localises to the chromosome. It carries out the reaction S-ubiquitinyl-[E2 ubiquitin-conjugating enzyme]-L-cysteine + [acceptor protein]-L-lysine = [E2 ubiquitin-conjugating enzyme]-L-cysteine + N(6)-ubiquitinyl-[acceptor protein]-L-lysine.. Its pathway is protein modification; protein ubiquitination. Its function is as follows. Ubiquitin E3 ligase that acts as a crucial factor for crossing-over (CO) formation during meiosis. Essential for normal prophase I progression and for ensuring appropriate CO designation in meiosis. Recruits key components of the cross-over machinery either directly ou indirectly, leading to the activation of the MutL-gamma complex. The function of RNF212B in CO designation is dependent on its catalytic activity. In Pongo abelii (Sumatran orangutan), this protein is E3 ubiquitin-protein ligase RNF212B (RNF212B).